The following is an 88-amino-acid chain: Large ribosomal subunit protein bL27 (88 aa).

The segment at 1–26 is disordered; sequence MAHKKGASSSSNGRDSEAKRLGVKRF.

The protein belongs to the bacterial ribosomal protein bL27 family.

The protein is Large ribosomal subunit protein bL27 of Corynebacterium glutamicum (strain R).